Reading from the N-terminus, the 436-residue chain is 3-ketoacyl-CoA thiolase (436 aa).

The Acyl-thioester intermediate role is filled by cysteine 99. Catalysis depends on proton acceptor residues histidine 392 and cysteine 422.

The protein belongs to the thiolase-like superfamily. Thiolase family. In terms of assembly, heterotetramer of two alpha chains (FadJ) and two beta chains (FadI).

Its subcellular location is the cytoplasm. The enzyme catalyses an acyl-CoA + acetyl-CoA = a 3-oxoacyl-CoA + CoA. It participates in lipid metabolism; fatty acid beta-oxidation. Its function is as follows. Catalyzes the final step of fatty acid oxidation in which acetyl-CoA is released and the CoA ester of a fatty acid two carbons shorter is formed. The protein is 3-ketoacyl-CoA thiolase of Escherichia coli (strain K12 / MC4100 / BW2952).